The sequence spans 336 residues: GTPase Obg (336 aa).

The Obg domain occupies 1-159 (MKFLDQAKIY…RWVWLRLKLI (159 aa)). The OBG-type G domain maps to 160 to 328 (ADIGLVGLPN…LLRLLQDRVT (169 aa)). Residues 166–173 (GLPNAGKS), 191–195 (FTTLH), 213–216 (DIPG), 280–283 (NKCD), and 309–311 (SGA) each bind GTP. 2 residues coordinate Mg(2+): serine 173 and threonine 193.

It belongs to the TRAFAC class OBG-HflX-like GTPase superfamily. OBG GTPase family. In terms of assembly, monomer. Mg(2+) is required as a cofactor.

Its subcellular location is the cytoplasm. In terms of biological role, an essential GTPase which binds GTP, GDP and possibly (p)ppGpp with moderate affinity, with high nucleotide exchange rates and a fairly low GTP hydrolysis rate. Plays a role in control of the cell cycle, stress response, ribosome biogenesis and in those bacteria that undergo differentiation, in morphogenesis control. The protein is GTPase Obg of Gluconobacter oxydans (strain 621H) (Gluconobacter suboxydans).